Consider the following 152-residue polypeptide: Deoxyuridine 5'-triphosphate nucleotidohydrolase (152 aa).

Substrate is bound by residues 71 to 73 (RSG), Asn84, 88 to 90 (LID), and Met98.

This sequence belongs to the dUTPase family. The cofactor is Mg(2+).

It carries out the reaction dUTP + H2O = dUMP + diphosphate + H(+). It functions in the pathway pyrimidine metabolism; dUMP biosynthesis; dUMP from dCTP (dUTP route): step 2/2. Functionally, this enzyme is involved in nucleotide metabolism: it produces dUMP, the immediate precursor of thymidine nucleotides and it decreases the intracellular concentration of dUTP so that uracil cannot be incorporated into DNA. This Erwinia tasmaniensis (strain DSM 17950 / CFBP 7177 / CIP 109463 / NCPPB 4357 / Et1/99) protein is Deoxyuridine 5'-triphosphate nucleotidohydrolase.